The primary structure comprises 195 residues: Thymidine kinase (195 aa).

Residues 9-16 and 87-90 each bind ATP; these read STMNAGKS and DEAQ. Glutamate 88 serves as the catalytic Proton acceptor. Zn(2+) contacts are provided by cysteine 145, cysteine 147, cysteine 182, and histidine 185.

This sequence belongs to the thymidine kinase family. In terms of assembly, homotetramer.

The protein resides in the cytoplasm. The catalysed reaction is thymidine + ATP = dTMP + ADP + H(+). The chain is Thymidine kinase from Mannheimia succiniciproducens (strain KCTC 0769BP / MBEL55E).